A 664-amino-acid chain; its full sequence is DNA ligase (664 aa).

NAD(+) contacts are provided by residues 30-34, 79-80, and Glu-109; these read DFEFD and SL. Lys-111 serves as the catalytic N6-AMP-lysine intermediate. NAD(+) contacts are provided by Arg-132, Glu-169, Lys-284, and Lys-308. Residues Cys-403, Cys-406, Cys-421, and Cys-427 each coordinate Zn(2+). One can recognise a BRCT domain in the interval 586-664; that stretch reads NRSEKLKGLT…NEDAFLNMLE (79 aa).

It belongs to the NAD-dependent DNA ligase family. LigA subfamily. It depends on Mg(2+) as a cofactor. Mn(2+) serves as cofactor.

It carries out the reaction NAD(+) + (deoxyribonucleotide)n-3'-hydroxyl + 5'-phospho-(deoxyribonucleotide)m = (deoxyribonucleotide)n+m + AMP + beta-nicotinamide D-nucleotide.. In terms of biological role, DNA ligase that catalyzes the formation of phosphodiester linkages between 5'-phosphoryl and 3'-hydroxyl groups in double-stranded DNA using NAD as a coenzyme and as the energy source for the reaction. It is essential for DNA replication and repair of damaged DNA. The polypeptide is DNA ligase (Parabacteroides distasonis (strain ATCC 8503 / DSM 20701 / CIP 104284 / JCM 5825 / NCTC 11152)).